Consider the following 393-residue polypeptide: MTNEEPLPKKVRLNESDFKVLPREDLLQRWKQYEAYVQALENKYTDLNSNDVTGLRESEEKLKQQQQESARRENILVMRLATKEQEMQECTNQIQHLKQVQQPSVAQLRATMVDPAINLFFIKMKAELEQTKDKLEQAQNELSAWKFTPDSQTGKKLMAKCRMLIQENQELGRQLSQGRIAQLEAELALQKKYSEELKSSQDELNDFIIQLDEEVEGMQSTILVLQQQLKDSRQQLSQFQQQIQISGNRTPSSEPKDEGETSGKDCGRILNGPSNGGSSLQRTHSSAGLYREGSSTEDDFSASPINEGKLSNHSQERTSRDGSSYINPLSTGYESVDSPTGSENSLTHQSNDTDSNHDSQEEKPVSGKGNRTVSSRHLQNGLDSSVNVQGSVL.

The interval 242-393 (QIQISGNRTP…SSVNVQGSVL (152 aa)) is disordered. Basic and acidic residues predominate over residues 254-267 (EPKDEGETSGKDCG). 2 stretches are compositionally biased toward polar residues: residues 272-286 (GPSN…THSS) and 321-353 (DGSS…SNDT). The span at 354-365 (DSNHDSQEEKPV) shows a compositional bias: basic and acidic residues. The span at 369 to 393 (GNRTVSSRHLQNGLDSSVNVQGSVL) shows a compositional bias: polar residues.

It belongs to the fl(2)d family. Component of the WMM complex, a N6-methyltransferase complex composed of a catalytic subcomplex, named MAC, and of an associated subcomplex, named MACOM. Component of the MACOM subcomplex.

Its subcellular location is the nucleus speckle. The protein resides in the nucleus. It is found in the nucleoplasm. Its function is as follows. Associated component of the WMM complex, a complex that mediates N6-methyladenosine (m6A) methylation of RNAs, a modification that plays a role in the efficiency of mRNA splicing and RNA processing. The chain is Pre-mRNA-splicing regulator WTAP from Xenopus laevis (African clawed frog).